Here is a 439-residue protein sequence, read N- to C-terminus: Hemagglutinin-esterase (439 aa).

Residues 1-22 (MGSMCIAMAPRTLLLLIGCQLA) form the signal peptide. Positions 12 to 132 (TLLLLIGCQL…DNKRWMGNKA (121 aa)) are esterase domain 1. Residues 23–407 (LGFNEPLNVV…PVCLYDPLPV (385 aa)) are Virion surface-facing. Catalysis depends on Ser45, which acts as the Nucleophile. Cysteines 49 and 70 form a disulfide. N-linked (GlcNAc...) asparagine; by host glycosylation is found at Asn94, Asn152, Asn196, Asn246, and Asn316. Cys118 and Cys167 are oxidised to a cystine. A receptor binding region spans residues 133–281 (RFYALVYKKM…GNYKAVSLEY (149 aa)). Intrachain disulfides connect Cys202/Cys291 and Cys210/Cys264. The interval 282–395 (LLTIPSKAIC…QCPTAANIEF (114 aa)) is esterase domain 2. A disulfide bridge connects residues Cys322 and Cys327. Asn331 and Asn337 each carry an N-linked (GlcNAc...) asparagine; by host glycan. Catalysis depends on charge relay system residues Asp342 and His345. Asn360 and Asn374 each carry an N-linked (GlcNAc...) asparagine; by host glycan. Residues Cys363 and Cys387 are joined by a disulfide bond. Residues 408-428 (ILLGVLLGIAVLIIVFLLFYF) traverse the membrane as a helical segment. At 429-439 (MTDSGVRLHEA) the chain is on the intravirion side.

Belongs to the influenza type C/coronaviruses hemagglutinin-esterase family. Homodimer; disulfide-linked. Forms a complex with the M protein in the pre-Golgi. Associates then with S-M complex to form a ternary complex S-M-HE. N-glycosylated in the host RER.

Its subcellular location is the virion membrane. It is found in the host cell membrane. The catalysed reaction is N-acetyl-9-O-acetylneuraminate + H2O = N-acetylneuraminate + acetate + H(+). It carries out the reaction N-acetyl-4-O-acetylneuraminate + H2O = N-acetylneuraminate + acetate + H(+). Functionally, structural protein that makes short spikes at the surface of the virus. Contains receptor binding and receptor-destroying activities. Mediates de-O-acetylation of N-acetyl-4-O-acetylneuraminic acid, which is probably the receptor determinant recognized by the virus on the surface of erythrocytes and susceptible cells. This receptor-destroying activity is important for virus release as it probably helps preventing self-aggregation and ensures the efficient spread of the progeny virus from cell to cell. May serve as a secondary viral attachment protein for initiating infection, the spike protein being the major one. May become a target for both the humoral and the cellular branches of the immune system. The chain is Hemagglutinin-esterase from Puffinosis coronavirus (PV).